Here is a 582-residue protein sequence, read N- to C-terminus: Peptidyl-prolyl cis-trans isomerase FKBP10 (582 aa).

A signal peptide spans 1 to 26; that stretch reads MFPAGPPSHSLLRLPLLQLLLLVVQA. 3 PPIase FKBP-type domains span residues 62 to 150, 174 to 262, and 286 to 374; these read GDFV…LDVW, GDFV…IDVH, and GDFM…IDFH. N-linked (GlcNAc...) asparagine glycosylation is found at Asn70, Asn182, Asn294, Asn310, Asn352, Asn393, and Asn407. The PPIase FKBP-type 4 domain maps to 399-486; it reads GDFVRYHYNC…LFEVELVSRE (88 aa). EF-hand domains are found at residues 497-532 and 542-577; these read WHKDPPANLFEDMDLNKDGEVPPEEFSTFIKAQVSE and DPEKTIGDMFQNQDRNQDGKITVDELKLKSDEDEER. Ca(2+)-binding residues include Asp510, Asn512, Asp514, Glu516, Glu521, Asp555, Asn557, Asp559, Lys561, and Glu566. The disordered stretch occupies residues 533–582; that stretch reads GKGRLMPGQDPEKTIGDMFQNQDRNQDGKITVDELKLKSDEDEERVHEEL. Over residues 556-582 the composition is skewed to basic and acidic residues; the sequence is RNQDGKITVDELKLKSDEDEERVHEEL. The Prevents secretion from ER motif lies at 579-582; the sequence is HEEL.

Post-translationally, glycosylated and phosphorylated.

It localises to the endoplasmic reticulum lumen. The enzyme catalyses [protein]-peptidylproline (omega=180) = [protein]-peptidylproline (omega=0). With respect to regulation, inhibited by both FK506 and rapamycin, but not by cyclosporin A. Functionally, PPIases accelerate the folding of proteins during protein synthesis. The polypeptide is Peptidyl-prolyl cis-trans isomerase FKBP10 (FKBP10) (Homo sapiens (Human)).